The chain runs to 73 residues: Large ribosomal subunit protein bL31 (73 aa).

The protein belongs to the bacterial ribosomal protein bL31 family. Type A subfamily. Part of the 50S ribosomal subunit.

Functionally, binds the 23S rRNA. The polypeptide is Large ribosomal subunit protein bL31 (Rhizobium johnstonii (strain DSM 114642 / LMG 32736 / 3841) (Rhizobium leguminosarum bv. viciae)).